The primary structure comprises 404 residues: Phosphoglycerate kinase (404 aa).

Substrate contacts are provided by residues 22-24 (DLN), arginine 37, 60-63 (HLGR), arginine 119, and arginine 156. Residues lysine 206, glycine 302, glutamate 333, and 359–362 (GGDS) each bind ATP.

Belongs to the phosphoglycerate kinase family. Monomer.

Its subcellular location is the cytoplasm. The catalysed reaction is (2R)-3-phosphoglycerate + ATP = (2R)-3-phospho-glyceroyl phosphate + ADP. It functions in the pathway carbohydrate degradation; glycolysis; pyruvate from D-glyceraldehyde 3-phosphate: step 2/5. The protein is Phosphoglycerate kinase of Clavibacter sepedonicus (Clavibacter michiganensis subsp. sepedonicus).